A 501-amino-acid chain; its full sequence is Probable malate:quinone oxidoreductase (501 aa).

This sequence belongs to the MQO family. The cofactor is FAD.

The catalysed reaction is (S)-malate + a quinone = a quinol + oxaloacetate. It functions in the pathway carbohydrate metabolism; tricarboxylic acid cycle; oxaloacetate from (S)-malate (quinone route): step 1/1. This chain is Probable malate:quinone oxidoreductase, found in Paenarthrobacter aurescens (strain TC1).